The chain runs to 331 residues: Glyceraldehyde-3-phosphate dehydrogenase 3 (331 aa).

NAD(+) is bound by residues 11–12 (RI), Asp33, and Glu77. Ser148 bears the Phosphoserine mark. D-glyceraldehyde 3-phosphate is bound at residue 148–150 (SCT). Residue Cys149 is the Nucleophile of the active site. Ser177 is modified (phosphoserine). Thr179 provides a ligand contact to D-glyceraldehyde 3-phosphate. At Ser200 the chain carries Phosphoserine. D-glyceraldehyde 3-phosphate is bound by residues 208-209 (TG) and Arg231. Asn313 serves as a coordination point for NAD(+).

Belongs to the glyceraldehyde-3-phosphate dehydrogenase family. In terms of assembly, homotetramer.

The protein localises to the cytoplasm. The enzyme catalyses D-glyceraldehyde 3-phosphate + phosphate + NAD(+) = (2R)-3-phospho-glyceroyl phosphate + NADH + H(+). It participates in carbohydrate degradation; glycolysis; pyruvate from D-glyceraldehyde 3-phosphate: step 1/5. This is Glyceraldehyde-3-phosphate dehydrogenase 3 from Kluyveromyces marxianus (Yeast).